Reading from the N-terminus, the 433-residue chain is 3-phosphoshikimate 1-carboxyvinyltransferase (433 aa).

The 3-phosphoshikimate site is built by Lys23, Ser24, and Arg28. Lys23 lines the phosphoenolpyruvate pocket. Positions 95 and 123 each coordinate phosphoenolpyruvate. Positions 170, 171, 172, 198, 317, and 344 each coordinate 3-phosphoshikimate. Gln172 is a binding site for phosphoenolpyruvate. Asp317 serves as the catalytic Proton acceptor. Phosphoenolpyruvate contacts are provided by Arg348, Arg391, and Lys416.

This sequence belongs to the EPSP synthase family. As to quaternary structure, monomer.

It localises to the cytoplasm. The catalysed reaction is 3-phosphoshikimate + phosphoenolpyruvate = 5-O-(1-carboxyvinyl)-3-phosphoshikimate + phosphate. Its pathway is metabolic intermediate biosynthesis; chorismate biosynthesis; chorismate from D-erythrose 4-phosphate and phosphoenolpyruvate: step 6/7. Catalyzes the transfer of the enolpyruvyl moiety of phosphoenolpyruvate (PEP) to the 5-hydroxyl of shikimate-3-phosphate (S3P) to produce enolpyruvyl shikimate-3-phosphate and inorganic phosphate. In Neisseria meningitidis serogroup B (strain ATCC BAA-335 / MC58), this protein is 3-phosphoshikimate 1-carboxyvinyltransferase.